A 158-amino-acid chain; its full sequence is Rhombotin-2 (158 aa).

LIM zinc-binding domains are found at residues Leu-28–Gln-90 and Gly-92–Leu-154.

Expression becomes restricted to the ventral blood island (VBI) as the embryo develops. In late neurula and early tailbud embryos, also expressed in the dorsal lateral plate (DLP), the site of definitive hematopoiesis in the tadpole. Expression in the DLP diminishes during tailbud stages. Expressed in circulating blood cells of tadpoles. Also expressed in non-hematopoietic sites, including the tailbud region and the central nervous system of early neurula embryos.

It is found in the nucleus. Transcription factor that acts synergistically with tal1/scl and gata1 to specify embryonic dorsal mesoderm to a hematopoietic fate. Induces globin gene expression together with fgf. The polypeptide is Rhombotin-2 (Xenopus laevis (African clawed frog)).